The sequence spans 258 residues: Rho-related GTP-binding protein RhoU (258 aa).

Residues 1–45 form a disordered region; the sequence is MPPQQGDPAFPDRCEAPPVPPRRERGGRGGRGPGEPGGRGRAGGA. The segment covering 10 to 27 has biased composition (basic and acidic residues); it reads FPDRCEAPPVPPRRERGG. Residues 29-45 show a composition bias toward gly residues; that stretch reads GGRGPGEPGGRGRAGGA. GTP-binding positions include 56 to 63, 103 to 107, and 161 to 164; these read GDGAVGKT, DTAGQ, and TQSD. Glycyl lysine isopeptide (Lys-Gly) (interchain with G-Cter in ubiquitin) cross-links involve residues K177 and K248. C256 carries S-palmitoyl cysteine lipidation.

This sequence belongs to the small GTPase superfamily. Rho family. In terms of assembly, interacts with PAK1. Interacts with PAK3. Interacts with ARHGAP30 in a GTP-independent manner. In its GTP-loaded conformation, interacts with ARHGAP31. Interacts with PTK2B/PYK2. Interacts with PAK4; the interaction is PAK4 kinase activity-independent and protects RHOU from ubiquitination. Requires Mg(2+) as cofactor. Post-translationally, ubiquitinated. 'Lys-48'-linked ubiquitination at Lys-177 and Lys-248 by the ECS(RAB40A) complex leading to its degradation. Tyrosine phosphorylated by SRC in response to PTK2B/PYK2 activation. Ubiquitously expressed in all tissues examined. Expressed at high levels in the stomach, small intestine, brain, skeletal muscle and placenta.

It localises to the cell membrane. The protein localises to the golgi apparatus membrane. The protein resides in the cell junction. It is found in the focal adhesion. Its subcellular location is the cell projection. It localises to the podosome. In terms of biological role, binds to and activates protein kinase PAK1. Plays a role in the regulation of cell morphology, cytoskeletal organization and focal adhesion assembly during cell migration. Also stimulates quiescent cells to reenter the cell cycle. Has no detectable GTPase activity but its high intrinsic guanine nucleotide exchange activity suggests it is constitutively GTP-bound. This chain is Rho-related GTP-binding protein RhoU, found in Homo sapiens (Human).